Here is a 1414-residue protein sequence, read N- to C-terminus: DNA-directed RNA polymerase subunit beta'' (1414 aa).

Cysteine 220, cysteine 293, cysteine 300, and cysteine 303 together coordinate Zn(2+).

The protein belongs to the RNA polymerase beta' chain family. RpoC2 subfamily. In terms of assembly, in plastids the minimal PEP RNA polymerase catalytic core is composed of four subunits: alpha, beta, beta', and beta''. When a (nuclear-encoded) sigma factor is associated with the core the holoenzyme is formed, which can initiate transcription. It depends on Zn(2+) as a cofactor.

It is found in the plastid. The protein localises to the chloroplast. The enzyme catalyses RNA(n) + a ribonucleoside 5'-triphosphate = RNA(n+1) + diphosphate. Functionally, DNA-dependent RNA polymerase catalyzes the transcription of DNA into RNA using the four ribonucleoside triphosphates as substrates. This is DNA-directed RNA polymerase subunit beta'' from Angiopteris evecta (Mule's foot fern).